Here is a 457-residue protein sequence, read N- to C-terminus: Multidrug resistance protein MdtK (457 aa).

The Cytoplasmic portion of the chain corresponds to 1 to 10; it reads MQKYISEARL. A helical membrane pass occupies residues 11–31; sequence LLALAIPVILAQIAQTAMGFV. Topologically, residues 32-52 are periplasmic; sequence DTVMAGGYSATDMAAVAIGTS. Residues 53–73 form a helical membrane-spanning segment; sequence IWLPAILFGHGLLLALTPVIA. Residues 74 to 92 lie on the Cytoplasmic side of the membrane; it reads QLNGSGRRERIAHQVRQGF. The helical transmembrane segment at 93–113 threads the bilayer; the sequence is WLAGFVSVLIMLVLWNAGYII. The Periplasmic portion of the chain corresponds to 114-126; sequence RSMENIDPALADK. The helical transmembrane segment at 127–147 threads the bilayer; sequence AVGYLRALLWGAPGYLFFQVA. The Cytoplasmic segment spans residues 148 to 159; that stretch reads RNQCEGLAKTKP. A helical membrane pass occupies residues 160–180; the sequence is GMVMGFIGLLVNIPVNYIFIY. Residues 181–191 are Periplasmic-facing; that stretch reads GHFGMPELSGV. A helical membrane pass occupies residues 192–212; that stretch reads GCGVATAAVYWAMFLAMVSYI. Over 213-242 the chain is Cytoplasmic; that stretch reads KRARSMRDIRNEKGTAKPDPAVMKRLIQLG. The chain crosses the membrane as a helical span at residues 243-263; sequence LPIALALFFEVTLFAVVALLV. Topologically, residues 264–275 are periplasmic; the sequence is SPLGIVDVAGHQ. The helical transmembrane segment at 276-296 threads the bilayer; the sequence is IALNFSSLMFVLPMSLAAAVT. Topologically, residues 297–313 are cytoplasmic; sequence IRVGYRLGQGSTLDAQT. Residues 314–334 traverse the membrane as a helical segment; sequence AARTGLMVGVCMATLTAIFTV. Residues 335–349 lie on the Periplasmic side of the membrane; sequence SLREQIALLYNDNPE. Residues 350-370 form a helical membrane-spanning segment; sequence VVTLAAHLMLLAAVYQISDSI. The Cytoplasmic segment spans residues 371-386; sequence QVIGSGILRGYKDTRS. Residues 387-407 traverse the membrane as a helical segment; the sequence is IFYITFTAYWVLGLPSGYILA. The Periplasmic segment spans residues 408 to 417; sequence LTDLVVEPMG. A helical transmembrane segment spans residues 418–438; it reads PAGFWIGFIIGLTSAAIMMML. Topologically, residues 439–457 are cytoplasmic; it reads RMRFLQRLPSAIILQRASR.

It belongs to the multi antimicrobial extrusion (MATE) (TC 2.A.66.1) family. MdtK subfamily.

The protein localises to the cell inner membrane. Its function is as follows. Multidrug efflux pump that functions probably as a Na(+)/drug antiporter. The polypeptide is Multidrug resistance protein MdtK (Shigella dysenteriae serotype 1 (strain Sd197)).